A 350-amino-acid polypeptide reads, in one-letter code: C5a anaphylatoxin chemotactic receptor 1 (350 aa).

The Extracellular segment spans residues 1–37 (MDSFDYTTPDYGHYDDKDTLDLNTPVDKTSNTLRVPD). A required for CHIPS binding region spans residues 10–18 (DYGHYDDKD). 2 positions are modified to sulfotyrosine: Tyr11 and Tyr14. Residues 21–30 (DLNTPVDKTS) form an involved in C5a binding region. A helical membrane pass occupies residues 38 to 64 (ILALVIFAVVFLVGVLGNALVVWVTAF). At 65 to 69 (EAKRT) the chain is on the cytoplasmic side. Residues 70–93 (INAIWFLNLAVADFLSCLALPILF) form a helical membrane-spanning segment. The Extracellular segment spans residues 94–110 (TSIVQHHHWPFGGAACS). Cys109 and Cys188 form a disulfide bridge. A helical transmembrane segment spans residues 111-132 (ILPSLILLNMYASILLLATISA). Over 133–153 (DRFLLVFKPIWCQNFRGAGLA) the chain is Cytoplasmic. A helical transmembrane segment spans residues 154–174 (WIACAVAWGLALLLTIPSFLY). Topologically, residues 175–200 (RVVREEYFPPKVLCGVDYSHDKRRER) are extracellular. A helical transmembrane segment spans residues 201 to 226 (AVAIVRLVLGFLWPLLTLMICYTFIL). The Cytoplasmic portion of the chain corresponds to 227–242 (LRTWSRRATRSTKTLK). A helical transmembrane segment spans residues 243 to 265 (VVVAVVASFFIFWLPYQVTGIMM). The Extracellular segment spans residues 266–282 (SFLEPSSPTFRLLKKLD). The chain crosses the membrane as a helical span at residues 283-303 (SLCVSFAYINCCINPIIYVVA). Residues 304 to 350 (GQGFQGRLQKSLPSLLRNVLTEESVVRESKSFARSTVDTMADKTQAV) lie on the Cytoplasmic side of the membrane. 6 positions are modified to phosphoserine: Ser314, Ser317, Ser327, Ser332, Ser334, and Ser338.

This sequence belongs to the G-protein coupled receptor 1 family. In terms of assembly, homodimer. May also form higher-order oligomers. Interacts (when phosphorylated) with ARRB1 and ARRB2; the interaction is associated with internalization of C5aR. Interacts (via N-terminal domain) with S.aureus chemotaxis inhibitory protein (CHIPS); the interaction blocks the receptor and may thus inhibit the immune response. Sulfation plays a critical role in the association of C5aR with C5a, but no significant role in the ability of the receptor to transduce a signal and mobilize calcium in response to a small peptide agonist. Sulfation at Tyr-14 is important for CHIPS binding. Post-translationally, phosphorylated on serine residues in response to C5a binding, resulting in internalization of the receptor and short-term desensitization to C5a.

It is found in the cell membrane. Its subcellular location is the cytoplasmic vesicle. Its function is as follows. Receptor for the chemotactic and inflammatory peptide anaphylatoxin C5a. The ligand interacts with at least two sites on the receptor: a high-affinity site on the extracellular N-terminus, and a second site in the transmembrane region which activates downstream signaling events. Receptor activation stimulates chemotaxis, granule enzyme release, intracellular calcium release and superoxide anion production. In Pan troglodytes (Chimpanzee), this protein is C5a anaphylatoxin chemotactic receptor 1 (C5AR1).